The sequence spans 296 residues: Nucleotide-binding protein SEQ_0857 (296 aa).

13–20 (GMSGAGKT) is an ATP binding site. Position 63–66 (63–66 (DMRS)) interacts with GTP.

Belongs to the RapZ-like family.

Displays ATPase and GTPase activities. The chain is Nucleotide-binding protein SEQ_0857 from Streptococcus equi subsp. equi (strain 4047).